Reading from the N-terminus, the 448-residue chain is U-box domain-containing protein 30 (448 aa).

In terms of domain architecture, U-box spans 63–137 (DIPSVFICPI…YTWFSQKYVL (75 aa)). ARM repeat units lie at residues 179-219 (LMAR…SLDL) and 221-260 (SDSK…GLVE).

The catalysed reaction is S-ubiquitinyl-[E2 ubiquitin-conjugating enzyme]-L-cysteine + [acceptor protein]-L-lysine = [E2 ubiquitin-conjugating enzyme]-L-cysteine + N(6)-ubiquitinyl-[acceptor protein]-L-lysine.. It participates in protein modification; protein ubiquitination. Functions as an E3 ubiquitin ligase. The chain is U-box domain-containing protein 30 (PUB30) from Arabidopsis thaliana (Mouse-ear cress).